The primary structure comprises 465 residues: Zinc finger and BTB domain-containing protein 32 (465 aa).

A BTB domain is found at 29–87 (CDTLITVGGLEFPAHSLVLAGASPRLGCRGRWALVEDISPSTFAQILTFVYGESIELQP). Disordered stretches follow at residues 111–179 (RAQK…EMAG) and 285–310 (QNQL…PWQI). 2 stretches are compositionally biased toward basic and acidic residues: residues 123–139 (PGLK…RGSE) and 147–176 (EKQK…ERPE). C2H2-type zinc fingers lie at residues 350 to 372 (YSCS…YRVH), 378 to 400 (FSCS…LRTH), and 405 to 427 (YRCP…MRGH).

It belongs to the krueppel C2H2-type zinc-finger protein family. Homodimer (via PTB domain). Interacts with the N-terminal of FANCC. Interacts with ZBTB16. Interacts with GATA3. In terms of tissue distribution, isoform 1 is testis-specific and is not expressed in lymphoid organs such as thymus or spleen. Isoform 2 is expressed in both B- and T-lymphoid cells.

It localises to the nucleus. Its function is as follows. DNA-binding protein that binds to the to a 5'-TGTACAGTGT-3' core sequence. May function as a transcriptional transactivator and transcriptional repressor. Probably exerts its repressor effect by preventing GATA3 from binding to DNA. May play a role in regulating the differentiation and activation of helper T-cells. The chain is Zinc finger and BTB domain-containing protein 32 (Zbtb32) from Mus musculus (Mouse).